A 673-amino-acid chain; its full sequence is DNA ligase (673 aa).

Residues 33–37 (DAEYD), 82–83 (SL), and Glu115 contribute to the NAD(+) site. The N6-AMP-lysine intermediate role is filled by Lys117. Residues Arg138, Glu175, Lys292, and Lys316 each contribute to the NAD(+) site. The Zn(2+) site is built by Cys410, Cys413, Cys428, and Cys434. In terms of domain architecture, BRCT spans 593-673 (VGDNPFKEKT…TFLAWSKPYL (81 aa)).

The protein belongs to the NAD-dependent DNA ligase family. LigA subfamily. Mg(2+) serves as cofactor. Mn(2+) is required as a cofactor.

The enzyme catalyses NAD(+) + (deoxyribonucleotide)n-3'-hydroxyl + 5'-phospho-(deoxyribonucleotide)m = (deoxyribonucleotide)n+m + AMP + beta-nicotinamide D-nucleotide.. DNA ligase that catalyzes the formation of phosphodiester linkages between 5'-phosphoryl and 3'-hydroxyl groups in double-stranded DNA using NAD as a coenzyme and as the energy source for the reaction. It is essential for DNA replication and repair of damaged DNA. This chain is DNA ligase, found in Pasteurella multocida (strain Pm70).